Here is a 273-residue protein sequence, read N- to C-terminus: Outer surface protein A (273 aa).

A signal peptide spans 1–16; it reads MKKYLLGIGLILALIA. Cysteine 17 is lipidated: N-palmitoyl cysteine. A lipid anchor (S-diacylglycerol cysteine) is attached at cysteine 17.

This sequence belongs to the OspA lipoprotein family.

The protein resides in the cell outer membrane. It is found in the cell surface. The chain is Outer surface protein A from Borreliella burgdorferi (strain N40) (Borrelia burgdorferi).